Consider the following 325-residue polypeptide: Melanocortin receptor 5 (325 aa).

The Extracellular portion of the chain corresponds to 1-37 (MNSSSHLTLLDLTLNASEDNILGQNVNNKSSACEDMG). 3 N-linked (GlcNAc...) asparagine glycosylation sites follow: Asn-2, Asn-15, and Asn-28. The helical transmembrane segment at 38 to 61 (IAVEVFLTLGLVSLLENILVIGAI) threads the bilayer. At 62-73 (VKNKNLHSPMYF) the chain is on the cytoplasmic side. The chain crosses the membrane as a helical span at residues 74-97 (FVGSLAVADMLVSMSNAWETITIY). Residues 98–114 (LINNKHVVIADTFVRHI) are Extracellular-facing. A helical membrane pass occupies residues 115–138 (DNVFDSMICISVVASMCSLLAIAV). The Cytoplasmic portion of the chain corresponds to 139–155 (DRYITIFYALRYHHIMT). A helical transmembrane segment spans residues 156–179 (ARRSGVIIACIWTFCISCGIVFII). The Extracellular segment spans residues 180 to 186 (YYESKYV). Residues 187 to 211 (IVCLISMFFTMLFFMVSLYIHMFLL) form a helical membrane-spanning segment. Topologically, residues 212–239 (ARNHVKRIAASPRYNSVRQRASMKGAIT) are cytoplasmic. A helical membrane pass occupies residues 240-265 (LTMLLGIFIVCWSPFFLHLILMISCP). At 266–273 (QNVYCACF) the chain is on the extracellular side. Residues 274–297 (MSYFNMYLILIMCNSVIDPLIYAL) traverse the membrane as a helical segment. At 298–325 (RSQEMRRTFKEIICCHGFRRTCTLLGRY) the chain is on the cytoplasmic side. Residues Cys-311 and Cys-312 are each lipidated (S-palmitoyl cysteine).

The protein belongs to the G-protein coupled receptor 1 family. As to expression, very low expression levels is detected in brain, while high levels are found in adrenals, stomach, lung and spleen.

The protein localises to the cell membrane. Receptor for MSH (alpha, beta and gamma) and ACTH. The activity of this receptor is mediated by G proteins which activate adenylate cyclase. This receptor is a possible mediator of the immunomodulation properties of melanocortins. This chain is Melanocortin receptor 5 (Mc5r), found in Rattus norvegicus (Rat).